A 780-amino-acid chain; its full sequence is MTHEEHHAAKTLGIGKAIAVLTSGGDAQGMNAAVRAVVRVGIFTGARVFFVHEGYQGLVDGGDNIKEATWESVSMMLQLGGTVIGSARCKDFREREGRLRAAYNLVKRGITNLCVIGGDGSLTGADTFRSEWSELLGDLQKAGKITDEEATKSSYLNIVGLVGSIDNDFCGTDMTIGTDSALHRIIEIVDAITTTAQSHQRTFVLEVMGRHCGYLALVTSLSCGADWVFIPECPPDDDWEEHLCRRLSETRTRGSRLNIIIVAEGAIDRNGKPITSEDIKNLVVKRLGYDTRVTVLGHVQRGGTPSAFDRILGSRMGVEAVMALLEGTPDTPACVVSLSGNQAVRLPLMECVQVTKDVTKAMEEKKFDEALKLRGRSFMNNWEVYKLLAHVRPPVSKSGSHTVAVMNVGAPAAGMNAAVRSTVRIGLIQGNRVLVVHDGFEGLAKGQIEEAGWSYVGGWTGQGGSKLGTKRTLPKKSFEQISANITKFNIQGLVIIGGFEAYTGGLELMEGRKQFDELCIPFVVIPATVSNNVPGSDFSVGADTALNTICTTCDRIKQSAAGTKRRVFIIETMGGYCGYLATMAGLAAGADAAYIFEEPFTIRDLQANVEHLVQKMKTTVKRGLVLRNEKCNENYTTDFIFNLYSEEGKGIFDSRKNVLGHMQQGGSPTPFDRNFATKMGAKAMNWMSGIIKESYRNGRIFANTPDSGCVLGMRKRALLFQPVTELQGQTDFEHRIPKEQWWLKLRPILKILAKYEIDLDTSDHAHLEHITRKRSGEGAV.

Thr2 bears the N-acetylthreonine mark. The interval 2-390 (THEEHHAAKT…NWEVYKLLAH (389 aa)) is N-terminal catalytic PFK domain 1. ATP-binding positions include Gly25, 88-89 (RC), and 118-121 (GDGS). Asp119 contributes to the Mg(2+) binding site. Phosphoserine is present on Ser133. Substrate is bound by residues 164-166 (SID), Arg201, 208-210 (MGR), Glu264, Arg292, and 298-301 (HVQR). Asp166 acts as the Proton acceptor in catalysis. Ser377 carries the phosphoserine modification. The segment at 391–401 (VRPPVSKSGSH) is interdomain linker. A C-terminal regulatory PFK domain 2 region spans residues 402–780 (TVAVMNVGAP…TRKRSGEGAV (379 aa)). Residues Arg471 and 528-532 (TVSNN) contribute to the beta-D-fructose 2,6-bisphosphate site. A glycan (O-linked (GlcNAc) serine) is linked at Ser530. Lys557 is modified (N6-(2-hydroxyisobutyryl)lysine). Beta-D-fructose 2,6-bisphosphate contacts are provided by residues Arg566, 573-575 (MGG), Glu629, Arg655, and 661-664 (HMQQ). Position 667 is a phosphoserine (Ser667). Arg735 is a beta-D-fructose 2,6-bisphosphate binding site. At Ser775 the chain carries Phosphoserine.

The protein belongs to the phosphofructokinase type A (PFKA) family. ATP-dependent PFK group I subfamily. Eukaryotic two domain clade 'E' sub-subfamily. In terms of assembly, homo- and heterotetramers. Phosphofructokinase (PFK) enzyme functions as a tetramer composed of different combinations of 3 types of subunits, called PFKM (M), PFKL (L) and PFKP (P). The composition of the PFK tetramer differs according to the tissue type it is present in. The kinetic and regulatory properties of the tetrameric enzyme are dependent on the subunit composition, hence can vary across tissues. Interacts (via C-terminus) with HK1 (via N-terminal spermatogenic cell-specific region). Requires Mg(2+) as cofactor. GlcNAcylation decreases enzyme activity.

The protein resides in the cytoplasm. It catalyses the reaction beta-D-fructose 6-phosphate + ATP = beta-D-fructose 1,6-bisphosphate + ADP + H(+). It participates in carbohydrate degradation; glycolysis; D-glyceraldehyde 3-phosphate and glycerone phosphate from D-glucose: step 3/4. Allosterically activated by ADP, AMP, or fructose 2,6-bisphosphate, and allosterically inhibited by ATP or citrate. In terms of biological role, catalyzes the phosphorylation of D-fructose 6-phosphate to fructose 1,6-bisphosphate by ATP, the first committing step of glycolysis. The polypeptide is ATP-dependent 6-phosphofructokinase, muscle type (PFKM) (Macaca fascicularis (Crab-eating macaque)).